The following is a 757-amino-acid chain: Protein hunchback (757 aa).

2 disordered regions span residues 30–51 and 171–213; these read EPGHHLDGNSVASSPRQSPIPS and EKLQ…EDMK. The segment covering 39–51 has biased composition (polar residues); that stretch reads SVASSPRQSPIPS. Positions 197–213 are enriched in basic and acidic residues; sequence EPEKEHDQMSNSSEDMK. 4 consecutive C2H2-type zinc fingers follow at residues 239 to 261, 268 to 290, 296 to 318, and 324 to 348; these read YKCKTCGVVAITKVDFWAHTRTH, LQCPKCPFVTEFKHHLEYHIRKH, FQCDKCSYTCVNKSMLNSHRKSH, and YRCADCDYATKYCHSFKLHLRKYGH. Disordered stretches follow at residues 367–416, 511–535, and 602–694; these read DVYG…VATS, EQLQQQNQQQSDNEEEDQDDEYERK, and MTSP…APPS. Composition is skewed to low complexity over residues 397–414 and 512–521; these read VAAVAPQQQQSQPAQPVA and QLQQQNQQQS. A compositionally biased stretch (acidic residues) spans 522–531; that stretch reads DNEEEDQDDE. Residues 651–694 show a composition bias toward low complexity; the sequence is ANTSASSTASSSGNSSNASSNSNGNSSSNSSSNGTTSAVAAPPS. 2 C2H2-type zinc fingers span residues 704 to 726 and 732 to 756; these read YECKYCDIFFKDAVLYTIHMGYH and FKCNMCGEKCDGPVGLFVHMARNAH.

Belongs to the hunchback C2H2-type zinc-finger protein family.

The protein localises to the nucleus. Gap class segmentation protein that controls development of head structures. In Drosophila sechellia (Fruit fly), this protein is Protein hunchback (hb).